A 124-amino-acid chain; its full sequence is Small ribosomal subunit protein uS12 (124 aa).

Residue Asp89 is modified to 3-methylthioaspartic acid.

Belongs to the universal ribosomal protein uS12 family. Part of the 30S ribosomal subunit. Contacts proteins S8 and S17. May interact with IF1 in the 30S initiation complex.

Its function is as follows. With S4 and S5 plays an important role in translational accuracy. Interacts with and stabilizes bases of the 16S rRNA that are involved in tRNA selection in the A site and with the mRNA backbone. Located at the interface of the 30S and 50S subunits, it traverses the body of the 30S subunit contacting proteins on the other side and probably holding the rRNA structure together. The combined cluster of proteins S8, S12 and S17 appears to hold together the shoulder and platform of the 30S subunit. The chain is Small ribosomal subunit protein uS12 from Edwardsiella ictaluri (strain 93-146).